We begin with the raw amino-acid sequence, 535 residues long: CTP synthase (535 aa).

Positions 1–267 (MTKFIFVTGG…DDIVIKKLGL (267 aa)) are amidoligase domain. Residue serine 13 coordinates CTP. Serine 13 serves as a coordination point for UTP. 14–19 (SLGKGI) lines the ATP pocket. Tyrosine 54 contributes to the L-glutamine binding site. Residue aspartate 71 coordinates ATP. Residues aspartate 71 and glutamate 141 each coordinate Mg(2+). CTP contacts are provided by residues 148–150 (DIE), 188–193 (KTKPTQ), and lysine 224. Residues 188-193 (KTKPTQ) and lysine 224 each bind UTP. In terms of domain architecture, Glutamine amidotransferase type-1 spans 292 to 534 (TIGIVGKYVS…IGASLKTNKL (243 aa)). Glycine 354 is a binding site for L-glutamine. Cysteine 381 functions as the Nucleophile; for glutamine hydrolysis in the catalytic mechanism. Residues 382–385 (LGMQ), glutamate 405, and arginine 462 each bind L-glutamine. Catalysis depends on residues histidine 507 and glutamate 509.

It belongs to the CTP synthase family. Homotetramer.

It catalyses the reaction UTP + L-glutamine + ATP + H2O = CTP + L-glutamate + ADP + phosphate + 2 H(+). It carries out the reaction L-glutamine + H2O = L-glutamate + NH4(+). The catalysed reaction is UTP + NH4(+) + ATP = CTP + ADP + phosphate + 2 H(+). The protein operates within pyrimidine metabolism; CTP biosynthesis via de novo pathway; CTP from UDP: step 2/2. With respect to regulation, allosterically activated by GTP, when glutamine is the substrate; GTP has no effect on the reaction when ammonia is the substrate. The allosteric effector GTP functions by stabilizing the protein conformation that binds the tetrahedral intermediate(s) formed during glutamine hydrolysis. Inhibited by the product CTP, via allosteric rather than competitive inhibition. In terms of biological role, catalyzes the ATP-dependent amination of UTP to CTP with either L-glutamine or ammonia as the source of nitrogen. Regulates intracellular CTP levels through interactions with the four ribonucleotide triphosphates. This Carboxydothermus hydrogenoformans (strain ATCC BAA-161 / DSM 6008 / Z-2901) protein is CTP synthase.